The primary structure comprises 242 residues: Tryptophan synthase alpha chain (242 aa).

Residues Glu-31 and Asp-42 each act as proton acceptor in the active site.

This sequence belongs to the TrpA family. In terms of assembly, tetramer of two alpha and two beta chains.

It carries out the reaction (1S,2R)-1-C-(indol-3-yl)glycerol 3-phosphate + L-serine = D-glyceraldehyde 3-phosphate + L-tryptophan + H2O. It functions in the pathway amino-acid biosynthesis; L-tryptophan biosynthesis; L-tryptophan from chorismate: step 5/5. Its function is as follows. The alpha subunit is responsible for the aldol cleavage of indoleglycerol phosphate to indole and glyceraldehyde 3-phosphate. In Staphylococcus aureus (strain MRSA252), this protein is Tryptophan synthase alpha chain.